Reading from the N-terminus, the 417-residue chain is Serine hydroxymethyltransferase 2 (417 aa).

(6S)-5,6,7,8-tetrahydrofolate is bound by residues L121 and 125-127; that span reads GHL. K229 carries the N6-(pyridoxal phosphate)lysine modification. 354–356 is a binding site for (6S)-5,6,7,8-tetrahydrofolate; sequence SPF.

This sequence belongs to the SHMT family. In terms of assembly, homodimer. Pyridoxal 5'-phosphate serves as cofactor.

The protein localises to the cytoplasm. It carries out the reaction (6R)-5,10-methylene-5,6,7,8-tetrahydrofolate + glycine + H2O = (6S)-5,6,7,8-tetrahydrofolate + L-serine. Its pathway is one-carbon metabolism; tetrahydrofolate interconversion. The protein operates within amino-acid biosynthesis; glycine biosynthesis; glycine from L-serine: step 1/1. In terms of biological role, catalyzes the reversible interconversion of serine and glycine with tetrahydrofolate (THF) serving as the one-carbon carrier. This reaction serves as the major source of one-carbon groups required for the biosynthesis of purines, thymidylate, methionine, and other important biomolecules. Also exhibits THF-independent aldolase activity toward beta-hydroxyamino acids, producing glycine and aldehydes, via a retro-aldol mechanism. This is Serine hydroxymethyltransferase 2 from Pseudomonas putida (strain ATCC 47054 / DSM 6125 / CFBP 8728 / NCIMB 11950 / KT2440).